An 815-amino-acid chain; its full sequence is (-)-kolavenyl diphosphate synthase TPS28, chloroplastic (815 aa).

A chloroplast-targeting transit peptide spans 1–51 (MFMSSSSSSHARRPQLSSFSYLHPPLPFPGLSFFNTRDKRVNFDSTRIICI). Substrate is bound at residue lysine 247. The Mg(2+) site is built by aspartate 379 and aspartate 381. The short motif at 379–382 (DIDD) is the DXDD motif element. Lysine 465 lines the substrate pocket.

The protein belongs to the terpene synthase family. Tpsc subfamily. Mg(2+) is required as a cofactor.

The protein localises to the plastid. Its subcellular location is the chloroplast. The catalysed reaction is (2E,6E,10E)-geranylgeranyl diphosphate = (-)-kolavenyl diphosphate. Its activity is regulated as follows. Inhibited by high concentrations of magnesium. Diterpene synthase that catalyzes the formation of (-)-kolavenyl diphosphate from geranylgeranyl diphosphate (GGPP). In Tripterygium wilfordii (Thunder God vine), this protein is (-)-kolavenyl diphosphate synthase TPS28, chloroplastic.